The following is a 189-amino-acid chain: Marginal zone B- and B1-cell-specific protein (189 aa).

The N-terminal stretch at 1 to 22 (MRLSLPLLLLLLGAWAIPGGLG) is a signal peptide. Disulfide bonds link cysteine 50-cysteine 178, cysteine 53-cysteine 171, and cysteine 95-cysteine 143. The Prevents secretion from ER signature appears at 186 to 189 (REEL).

Belongs to the MZB1 family. Part of the ER chaperone complex, a multi-protein complex in the endoplasmic reticulum containing a large number of molecular chaperones which associates with unassembled incompletely folded immunoglobulin heavy chains. Isoform 2 interacts with CASP2 and CASP9. Interacts with HSP90B1 and PDIA3 in a calcium-dependent manner. Post-translationally, forms an interchain disulfide bond with IgM monomers. Widely expressed with highest levels in adult brain, small intestine and lymphoid tissues such as thymus and spleen. Expression is frequently lower in intestinal-type gastric cancer. In obese patients, more abundant in omental than in subcutaneous fat.

The protein localises to the endoplasmic reticulum lumen. Its subcellular location is the secreted. The protein resides in the cytoplasm. In terms of biological role, associates with immunoglobulin M (IgM) heavy and light chains and promotes IgM assembly and secretion. May exert its effect by acting as a molecular chaperone or as an oxidoreductase as it displays a low level of oxidoreductase activity. Isoform 2 may be involved in regulation of apoptosis. Helps to diversify peripheral B-cell functions by regulating Ca(2+) stores, antibody secretion and integrin activation. Functionally, acts as a hormone-regulated adipokine/pro-inflammatory cytokine that is implicated in causing chronic inflammation, affecting cellular expansion and blunting insulin response in adipocytes. May have a role in the onset of insulin resistance. This chain is Marginal zone B- and B1-cell-specific protein (MZB1), found in Homo sapiens (Human).